A 202-amino-acid chain; its full sequence is Probable molybdenum cofactor guanylyltransferase (202 aa).

GTP is bound by residues 13-15 (LAG), Lys-25, Asp-71, and Asp-103. Asp-103 is a Mg(2+) binding site.

Belongs to the MobA family. The cofactor is Mg(2+).

It is found in the cytoplasm. It carries out the reaction Mo-molybdopterin + GTP + H(+) = Mo-molybdopterin guanine dinucleotide + diphosphate. Functionally, transfers a GMP moiety from GTP to Mo-molybdopterin (Mo-MPT) cofactor (Moco or molybdenum cofactor) to form Mo-molybdopterin guanine dinucleotide (Mo-MGD) cofactor. This is Probable molybdenum cofactor guanylyltransferase from Opitutus terrae (strain DSM 11246 / JCM 15787 / PB90-1).